We begin with the raw amino-acid sequence, 512 residues long: MEISVASVTVSVAVVVVSWWVWRTLQRVWLKPKMLESYLRRQGLAGTPYTPLVGDLKRNFSMLAEARSKPINLTDDITPRIVPYPLQMLKTHGRTFFTWFGPIPTITIMDPEQIKEVFNKVYDFQKAHTFPLGRLIAAGLVSYDGDKWTKHRRIINPAFHLEKIKNMVPAFHQSCSEIVGEWDKLVTDKQSSCEVDIWPWLVSMTADVISRTAFGSSYKEGQRIFELQAELAQLIIQAFRKAIIPGYRYFPTKGNRRMKAAAREIKFILRGIVNKRLRAREAGEAPSDDLLGILLESNLGQTKGNGMSTEELMEECKLFYFAGQETTTVLLVWTMVLLSQHQDWQARAREEVKQVFGDKEPDAEGLNQLKVMTMILYEVLRLYPPVVQLTRAIHKEMQLGDLTLPGGVQISLPILLIQRDRELWGNDAGEFKPDRFKDGLSKATKNQVSFFPFAWGPRICIGQNFALLEAKMAMTLILRKFSFELSPSYVHAPYTVLTTHPQFGAPLILHKL.

A helical transmembrane segment spans residues 2–22; sequence EISVASVTVSVAVVVVSWWVW. Cysteine 460 is a binding site for heme.

The protein belongs to the cytochrome P450 family. Heme serves as cofactor.

Its subcellular location is the membrane. This chain is Cytochrome P450 72A13 (CYP72A13), found in Arabidopsis thaliana (Mouse-ear cress).